A 61-amino-acid polypeptide reads, in one-letter code: Small venom protein 1 (61 aa).

An N-terminal signal peptide occupies residues 1 to 20 (MRCVAIFLVVICAFVLQALA).

Expressed by the venom gland.

Its subcellular location is the secreted. The sequence is that of Small venom protein 1 from Pimpla hypochondriaca (Parasitoid wasp).